Here is a 264-residue protein sequence, read N- to C-terminus: [LysW]-aminoadipate/[LysW]-glutamate kinase (264 aa).

Substrate contacts are provided by residues 35-36, Arg62, and Asn167; that span reads GG.

Belongs to the acetylglutamate kinase family. LysZ subfamily.

Its subcellular location is the cytoplasm. It catalyses the reaction [amino-group carrier protein]-C-terminal-N-(1,4-dicarboxybutan-1-yl)-L-glutamine + ATP = [amino-group carrier protein]-C-terminal-N-(1-carboxy-5-phosphooxy-5-oxopentan-1-yl)-L-glutamine + ADP. The catalysed reaction is [amino-group carrier protein]-C-terminal-gamma-(L-glutamyl)-L-glutamate + ATP = [amino-group carrier protein]-C-terminal-gamma-(5-phospho-L-glutamyl)-L-glutamate + ADP. Its pathway is amino-acid biosynthesis; L-lysine biosynthesis via AAA pathway; L-lysine from L-alpha-aminoadipate (Thermus route): step 2/5. It participates in amino-acid biosynthesis; L-arginine biosynthesis. In terms of biological role, involved in both the arginine and lysine biosynthetic pathways. Phosphorylates the LysW-bound precursors glutamate (for arginine biosynthesis), respectively alpha-aminoadipate (for lysine biosynthesis). In Saccharolobus islandicus (strain L.S.2.15 / Lassen #1) (Sulfolobus islandicus), this protein is [LysW]-aminoadipate/[LysW]-glutamate kinase.